We begin with the raw amino-acid sequence, 209 residues long: Uracil phosphoribosyltransferase (209 aa).

5-phospho-alpha-D-ribose 1-diphosphate-binding positions include R79, R104, and 131-139 (DPMLATGHT). Uracil is bound by residues I194 and 199–201 (GDA). D200 is a 5-phospho-alpha-D-ribose 1-diphosphate binding site.

Belongs to the UPRTase family. The cofactor is Mg(2+).

The catalysed reaction is UMP + diphosphate = 5-phospho-alpha-D-ribose 1-diphosphate + uracil. The protein operates within pyrimidine metabolism; UMP biosynthesis via salvage pathway; UMP from uracil: step 1/1. Its activity is regulated as follows. Allosterically activated by GTP. Its function is as follows. Catalyzes the conversion of uracil and 5-phospho-alpha-D-ribose 1-diphosphate (PRPP) to UMP and diphosphate. The protein is Uracil phosphoribosyltransferase of Caulobacter sp. (strain K31).